Here is a 61-residue protein sequence, read N- to C-terminus: Small ribosomal subunit protein uS14B (61 aa).

The Zn(2+) site is built by cysteine 24, cysteine 27, cysteine 40, and cysteine 43.

Belongs to the universal ribosomal protein uS14 family. Zinc-binding uS14 subfamily. Part of the 30S ribosomal subunit. Contacts proteins S3 and S10. Zn(2+) is required as a cofactor.

In terms of biological role, binds 16S rRNA, required for the assembly of 30S particles and may also be responsible for determining the conformation of the 16S rRNA at the A site. This chain is Small ribosomal subunit protein uS14B, found in Saccharopolyspora erythraea (strain ATCC 11635 / DSM 40517 / JCM 4748 / NBRC 13426 / NCIMB 8594 / NRRL 2338).